The chain runs to 176 residues: Cytochrome b (176 aa).

3 consecutive transmembrane segments (helical) span residues 33–53 (FGSLLGICLALQILTGIFLAM), 77–98 (WVLRYLHANGASMFFICLYLHV), and 113–133 (WNMGVILLFAVMATAFMGYVL). Heme b-binding residues include histidine 83 and histidine 97.

It belongs to the cytochrome b family. As to quaternary structure, the cytochrome bc1 complex contains 11 subunits: 3 respiratory subunits (MT-CYB, CYC1 and UQCRFS1), 2 core proteins (UQCRC1 and UQCRC2) and 6 low-molecular weight proteins (UQCRH/QCR6, UQCRB/QCR7, UQCRQ/QCR8, UQCR10/QCR9, UQCR11/QCR10 and a cleavage product of UQCRFS1). This cytochrome bc1 complex then forms a dimer. Requires heme b as cofactor.

Its subcellular location is the mitochondrion inner membrane. Its function is as follows. Component of the ubiquinol-cytochrome c reductase complex (complex III or cytochrome b-c1 complex) that is part of the mitochondrial respiratory chain. The b-c1 complex mediates electron transfer from ubiquinol to cytochrome c. Contributes to the generation of a proton gradient across the mitochondrial membrane that is then used for ATP synthesis. The sequence is that of Cytochrome b (MT-CYB) from Lasionycteris noctivagans (Silver-haired bat).